Reading from the N-terminus, the 252-residue chain is 3-dehydroquinate dehydratase (252 aa).

Residues Ser21, 46–48 (EWR), and Arg82 each bind 3-dehydroquinate. The Proton donor/acceptor role is filled by His143. Lys170 functions as the Schiff-base intermediate with substrate in the catalytic mechanism. Residues Arg213, Ser232, and Gln236 each coordinate 3-dehydroquinate.

Belongs to the type-I 3-dehydroquinase family. As to quaternary structure, homodimer.

It carries out the reaction 3-dehydroquinate = 3-dehydroshikimate + H2O. It functions in the pathway metabolic intermediate biosynthesis; chorismate biosynthesis; chorismate from D-erythrose 4-phosphate and phosphoenolpyruvate: step 3/7. Functionally, involved in the third step of the chorismate pathway, which leads to the biosynthesis of aromatic amino acids. Catalyzes the cis-dehydration of 3-dehydroquinate (DHQ) and introduces the first double bond of the aromatic ring to yield 3-dehydroshikimate. In Escherichia coli O139:H28 (strain E24377A / ETEC), this protein is 3-dehydroquinate dehydratase.